Consider the following 285-residue polypeptide: MMAVDIEYRYNCMAPSLRQERFAFKISPKPSKPLRPCIQLSSKNEASGMVAPAVQEKKVKKRVSFADNQGLALTMVKVFSEFDDPLDMPFNITELLDNIVSLTTAESESFVLDFSQPSADYLDFRNRLQADHVCLENCVLKDKAIAGTVKVQNLAFEKTVKIRMTFDTWKSYTDFPCQYVKDTYAGSDRDTFSFDISLPEKIQSYERMEFAVYYECNGQTYWDSNRGKNYRIIRAELKSTQGMTKPHSGPDLGISFDQFGSPRCSYGLFPEWPSYLGYEKLGPYY.

The short motif at 62–65 (RVSF) is the PP1-binding motif element. Residues 125–233 (RNRLQADHVC…SNRGKNYRII (109 aa)) form the CBM21 domain. Serine 261 bears the Phosphoserine mark.

Interacts with glycogen, PPP1CC catalytic subunit of PP1 and PYGL. Associates with glycogen particles. Forms complexes with debranching enzyme, glycogen phosphorylase, glycogen synthase and phosphorylase kinase which is necessary for its regulation of PP1 activity. In terms of tissue distribution, highly expressed in the liver and, at lower levels, in skeletal muscle, including in vastus lateralis, gastrocnemius and soleus (at protein level). Highest mRNA levels are observed in skeletal muscle, and only moderate levels in liver and heart. Weak expression in placenta and lung.

Acts as a glycogen-targeting subunit for phosphatase PP1. Facilitates interaction of the PP1 with enzymes of the glycogen metabolism and regulates its activity. Suppresses the rate at which PP1 dephosphorylates (inactivates) glycogen phosphorylase and enhances the rate at which it activates glycogen synthase and therefore limits glycogen breakdown. Its activity is inhibited by PYGL, resulting in inhibition of the glycogen synthase and glycogen phosphorylase phosphatase activities of PP1. Dramatically increases basal and insulin-stimulated glycogen synthesis upon overexpression in hepatocytes. The polypeptide is Protein phosphatase 1 regulatory subunit 3B (PPP1R3B) (Homo sapiens (Human)).